The sequence spans 471 residues: tRNA-2-methylthio-N(6)-dimethylallyladenosine synthase (471 aa).

The MTTase N-terminal domain occupies 31–149 (LYYHIETYGC…FPQLLWEALN (119 aa)). Residues Cys40, Cys76, Cys110, Cys186, Cys190, and Cys193 each contribute to the [4Fe-4S] cluster site. In terms of domain architecture, Radical SAM core spans 172-402 (RDSNLKAWVN…IELQNKISLE (231 aa)). Residues 405–468 (AELRGKIVEV…AWTMQGELVE (64 aa)) form the TRAM domain.

The protein belongs to the methylthiotransferase family. MiaB subfamily. Monomer. It depends on [4Fe-4S] cluster as a cofactor.

The protein localises to the cytoplasm. The catalysed reaction is N(6)-dimethylallyladenosine(37) in tRNA + (sulfur carrier)-SH + AH2 + 2 S-adenosyl-L-methionine = 2-methylsulfanyl-N(6)-dimethylallyladenosine(37) in tRNA + (sulfur carrier)-H + 5'-deoxyadenosine + L-methionine + A + S-adenosyl-L-homocysteine + 2 H(+). Catalyzes the methylthiolation of N6-(dimethylallyl)adenosine (i(6)A), leading to the formation of 2-methylthio-N6-(dimethylallyl)adenosine (ms(2)i(6)A) at position 37 in tRNAs that read codons beginning with uridine. This Thermoanaerobacter sp. (strain X514) protein is tRNA-2-methylthio-N(6)-dimethylallyladenosine synthase.